The chain runs to 91 residues: uncharacterized protein (91 aa).

This is an uncharacterized protein from Saccharolobus islandicus (Sulfolobus islandicus).